Reading from the N-terminus, the 384-residue chain is Alpha-2B adrenergic receptor (384 aa).

Residues 1 to 25 (AIAAVITFLILFTIFGNALVILAVL) form a helical membrane-spanning segment. At 26–36 (TSRSLRAPQNL) the chain is on the cytoplasmic side. Residues 37 to 62 (FLVSLAAADILVATLIIPFSLANELL) traverse the membrane as a helical segment. At 63–72 (GYWYFRRTWC) the chain is on the extracellular side. C72 and C151 are joined by a disulfide. The helical transmembrane segment at 73-95 (EVYLALDVLFCTSSIVHLCAISL) threads the bilayer. Over 96–117 (DRYWAVSRALQYNSKRTPRRIK) the chain is Cytoplasmic. Residues 118 to 140 (CVILTVWLIAAAISLPPLIYKGD) traverse the membrane as a helical segment. Over 141–156 (QGPQPRGRPQCKLNQE) the chain is Extracellular. A helical membrane pass occupies residues 157–180 (AWYILSSSIGSFFAPCLIMILVYL). Residues 181–348 (RIYLIAKRSN…LTREKRFTFV (168 aa)) are Cytoplasmic-facing. The tract at residues 192 to 289 (RGPRAKGAPR…PEEEEECGSP (98 aa)) is disordered. Residues 218 to 229 (LANSPTLASSLA) show a composition bias toward polar residues. Positions 240 to 249 (PPGEKERETP) are enriched in basic and acidic residues. Residues 349-372 (LAVVIGVFVLCWFPFFFSYSLGAI) traverse the membrane as a helical segment. The Extracellular segment spans residues 373–381 (CPQHCKVPH). Residues 382–384 (GLF) traverse the membrane as a helical segment.

Belongs to the G-protein coupled receptor 1 family. Adrenergic receptor subfamily. ADRA2B sub-subfamily. Interacts with RAB26. Interacts with PPP1R9B. Interacts with GGA1, GGA2 and GGA3.

It is found in the cell membrane. Its function is as follows. Alpha-2 adrenergic receptors mediate the catecholamine-induced inhibition of adenylate cyclase through the action of G proteins. In Elephas maximus (Indian elephant), this protein is Alpha-2B adrenergic receptor (ADRA2B).